Consider the following 403-residue polypeptide: Argininosuccinate synthase 1 (403 aa).

Residues 10-18 and Ala-37 each bind ATP; that span reads SYSGGLDTS. L-citrulline contacts are provided by Tyr-88 and Ser-93. Gly-118 lines the ATP pocket. Residues Thr-120, Asn-124, and Asp-125 each contribute to the L-aspartate site. Asn-124 serves as a coordination point for L-citrulline. Residues Arg-128, Ser-179, Ser-188, Glu-264, and Tyr-276 each coordinate L-citrulline.

The protein belongs to the argininosuccinate synthase family. Type 1 subfamily. As to quaternary structure, homotetramer.

The protein localises to the cytoplasm. The enzyme catalyses L-citrulline + L-aspartate + ATP = 2-(N(omega)-L-arginino)succinate + AMP + diphosphate + H(+). The protein operates within amino-acid biosynthesis; L-arginine biosynthesis; L-arginine from L-ornithine and carbamoyl phosphate: step 2/3. This is Argininosuccinate synthase 1 from Rhizobium johnstonii (strain DSM 114642 / LMG 32736 / 3841) (Rhizobium leguminosarum bv. viciae).